The primary structure comprises 231 residues: Phosphatidylserine decarboxylase proenzyme (231 aa).

The Schiff-base intermediate with substrate; via pyruvic acid role is filled by serine 188. Serine 188 carries the pyruvic acid (Ser); by autocatalysis modification.

It belongs to the phosphatidylserine decarboxylase family. PSD-A subfamily. As to quaternary structure, heterodimer of a large membrane-associated beta subunit and a small pyruvoyl-containing alpha subunit. The cofactor is pyruvate. Post-translationally, is synthesized initially as an inactive proenzyme. Formation of the active enzyme involves a self-maturation process in which the active site pyruvoyl group is generated from an internal serine residue via an autocatalytic post-translational modification. Two non-identical subunits are generated from the proenzyme in this reaction, and the pyruvate is formed at the N-terminus of the alpha chain, which is derived from the carboxyl end of the proenzyme. The post-translation cleavage follows an unusual pathway, termed non-hydrolytic serinolysis, in which the side chain hydroxyl group of the serine supplies its oxygen atom to form the C-terminus of the beta chain, while the remainder of the serine residue undergoes an oxidative deamination to produce ammonia and the pyruvoyl prosthetic group on the alpha chain.

It is found in the cell membrane. It carries out the reaction a 1,2-diacyl-sn-glycero-3-phospho-L-serine + H(+) = a 1,2-diacyl-sn-glycero-3-phosphoethanolamine + CO2. Its pathway is phospholipid metabolism; phosphatidylethanolamine biosynthesis; phosphatidylethanolamine from CDP-diacylglycerol: step 2/2. In terms of biological role, catalyzes the formation of phosphatidylethanolamine (PtdEtn) from phosphatidylserine (PtdSer). The sequence is that of Phosphatidylserine decarboxylase proenzyme from Rickettsia prowazekii (strain Madrid E).